The primary structure comprises 69 residues: Rubredoxin-1 (69 aa).

The 56-residue stretch at 14-69 (QASWMCAECGYIYDPAEGNLETNIRPGMPFDKLPDDWSCPVCNHPKNQFTKFISQL) folds into the Rubredoxin-like domain. Fe cation-binding residues include C19, C22, C52, and C55.

Belongs to the rubredoxin family. Monomer. Requires Fe(3+) as cofactor.

In terms of biological role, serves as an electron acceptor for pyruvate ferredoxin oxidoreductase (PFOR). The polypeptide is Rubredoxin-1 (rub1) (Chlorobaculum tepidum (strain ATCC 49652 / DSM 12025 / NBRC 103806 / TLS) (Chlorobium tepidum)).